Here is a 558-residue protein sequence, read N- to C-terminus: Glucose-6-phosphate isomerase (558 aa).

Position 12 is an N6-acetyllysine (Lys-12). Ser-86 and Ser-107 each carry phosphoserine. The residue at position 142 (Lys-142) is an N6-acetyllysine. 159 to 160 (GS) provides a ligand contact to D-glucose 6-phosphate. Position 185 is a phosphoserine; by CK2 (Ser-185). 210 to 215 (SKTFTT) contributes to the D-glucose 6-phosphate binding site. Thr-250 carries the post-translational modification Phosphothreonine. Gln-354, Glu-358, and His-389 together coordinate D-glucose 6-phosphate. Glu-358 acts as the Proton donor in catalysis. His-389 is an active-site residue. Residue Lys-454 is modified to N6-acetyllysine; alternate. Lys-454 bears the N6-malonyllysine; alternate mark. Lys-454 bears the N6-succinyllysine; alternate mark. Ser-455 is modified (phosphoserine). Residue Lys-519 coordinates D-glucose 6-phosphate. The active site involves Lys-519.

Belongs to the GPI family. As to quaternary structure, homodimer; in the catalytically active form. Monomer in the secreted form. Phosphorylation at Ser-185 by CK2 has been shown to decrease enzymatic activity and may contribute to secretion by a non-classical secretory pathway. In terms of processing, ISGylated.

It is found in the cytoplasm. It localises to the secreted. It carries out the reaction alpha-D-glucose 6-phosphate = beta-D-fructose 6-phosphate. It functions in the pathway carbohydrate degradation; glycolysis; D-glyceraldehyde 3-phosphate and glycerone phosphate from D-glucose: step 2/4. In the cytoplasm, catalyzes the conversion of glucose-6-phosphate to fructose-6-phosphate, the second step in glycolysis, and the reverse reaction during gluconeogenesis. Besides it's role as a glycolytic enzyme, also acts as a secreted cytokine: acts as an angiogenic factor (AMF) that stimulates endothelial cell motility. Acts as a neurotrophic factor, neuroleukin, for spinal and sensory neurons. It is secreted by lectin-stimulated T-cells and induces immunoglobulin secretion. This Cricetulus griseus (Chinese hamster) protein is Glucose-6-phosphate isomerase.